A 23-amino-acid polypeptide reads, in one-letter code: Retinol-binding protein 3 (23 aa).

It localises to the secreted. It is found in the extracellular space. The protein resides in the extracellular matrix. Its subcellular location is the interphotoreceptor matrix. In terms of biological role, IRBP shuttles 11-cis and all trans retinoids between the retinol isomerase in the pigment epithelium and the visual pigments in the photoreceptor cells of the retina. This chain is Retinol-binding protein 3 (RBP3), found in Oryctolagus cuniculus (Rabbit).